Consider the following 220-residue polypeptide: 7-cyano-7-deazaguanine synthase (220 aa).

Position 10-20 (10-20) interacts with ATP; the sequence is FSGGQDSTTCL. Residues C186, C195, C198, and C201 each contribute to the Zn(2+) site.

Belongs to the QueC family. As to quaternary structure, homodimer. It depends on Zn(2+) as a cofactor.

It catalyses the reaction 7-carboxy-7-deazaguanine + NH4(+) + ATP = 7-cyano-7-deazaguanine + ADP + phosphate + H2O + H(+). The protein operates within purine metabolism; 7-cyano-7-deazaguanine biosynthesis. In terms of biological role, catalyzes the ATP-dependent conversion of 7-carboxy-7-deazaguanine (CDG) to 7-cyano-7-deazaguanine (preQ(0)). The protein is 7-cyano-7-deazaguanine synthase of Bacillus cereus (strain B4264).